The primary structure comprises 351 residues: Peroxisomal membrane protein PEX14 (351 aa).

Positions 54–75 are disordered; sequence KARTGTVQASPSQQSVVPPRPP. The segment covering 60 to 70 has biased composition (low complexity); that stretch reads VQASPSQQSVV. An SH3-binding motif is present at residues 83–91; that stretch reads APPLPERDW. The segment at 243-351 is disordered; the sequence is APQLSTPPSE…RGIPAWQLNA (109 aa). Over residues 245–258 the composition is skewed to polar residues; the sequence is QLSTPPSESTSRQS. Positions 283–293 are enriched in basic and acidic residues; the sequence is VLSREKDKDVN. Residues 294–303 are compositionally biased toward polar residues; the sequence is SDSIAQYEQR. Residues 320-334 are compositionally biased toward low complexity; it reads SASNGGSSTTSGVAG.

The protein belongs to the peroxin-14 family. Interacts with PEX13 (via SH3 domain); forming the PEX13-PEX14 docking complex. Interacts with PEX5 (via WxxxF/Y motifs).

The protein resides in the peroxisome membrane. Functionally, component of the PEX13-PEX14 docking complex, a translocon channel that specifically mediates the import of peroxisomal cargo proteins bound to PEX5 receptor. The PEX13-PEX14 docking complex forms a large import pore which can be opened to a diameter of about 9 nm. Mechanistically, PEX5 receptor along with cargo proteins associates with the PEX14 subunit of the PEX13-PEX14 docking complex in the cytosol, leading to the insertion of the receptor into the organelle membrane with the concomitant translocation of the cargo into the peroxisome matrix. This is Peroxisomal membrane protein PEX14 from Pichia angusta (Yeast).